The following is a 956-amino-acid chain: uncharacterized protein (956 aa).

Positions 918-942 form a coiled coil; it reads NSINEAIEKLNEAADAYQAIIDQQK.

This is an uncharacterized protein from Acanthamoeba polyphaga (Amoeba).